The following is a 491-amino-acid chain: Anthranilate synthase component 1 (491 aa).

Residues S49 and 271-273 each bind L-tryptophan; that span reads PYL. Residue 306–307 coordinates chorismate; the sequence is GT. Residue E333 coordinates Mg(2+). Chorismate-binding positions include Y421, R441, 455 to 457, and G457; that span reads GAG. E470 is a binding site for Mg(2+).

This sequence belongs to the anthranilate synthase component I family. Heterotetramer consisting of two non-identical subunits: a beta subunit (TrpG) and a large alpha subunit (TrpE). Mg(2+) serves as cofactor.

It catalyses the reaction chorismate + L-glutamine = anthranilate + pyruvate + L-glutamate + H(+). The protein operates within amino-acid biosynthesis; L-tryptophan biosynthesis; L-tryptophan from chorismate: step 1/5. Feedback inhibited by tryptophan. In terms of biological role, part of a heterotetrameric complex that catalyzes the two-step biosynthesis of anthranilate, an intermediate in the biosynthesis of L-tryptophan. In the first step, the glutamine-binding beta subunit (TrpG) of anthranilate synthase (AS) provides the glutamine amidotransferase activity which generates ammonia as a substrate that, along with chorismate, is used in the second step, catalyzed by the large alpha subunit of AS (TrpE) to produce anthranilate. In the absence of TrpG, TrpE can synthesize anthranilate directly from chorismate and high concentrations of ammonia. In Neisseria meningitidis serogroup B (strain ATCC BAA-335 / MC58), this protein is Anthranilate synthase component 1 (trpE).